Reading from the N-terminus, the 136-residue chain is Large ribosomal subunit protein uL16c (136 aa).

Residues 1 to 20 (MLSPKRTRFRKQHRGRMKGK) are disordered.

Belongs to the universal ribosomal protein uL16 family. Part of the 50S ribosomal subunit.

The protein localises to the plastid. It localises to the chloroplast. This Agrostis stolonifera (Creeping bentgrass) protein is Large ribosomal subunit protein uL16c.